The chain runs to 1271 residues: Clustered mitochondria protein homolog (1271 aa).

TPR repeat units follow at residues 104–138 (RHKPYTLAAVYEHLNKFREVIGLHFIDRRAFELGE) and 502–535 (CYGLSTDGTKVYSDSQFHEALKPIAEAFHMKPHK). The Clu domain maps to 329–580 (DQSRPQLSIL…RSTPLDIDFI (252 aa)). Basic and acidic residues predominate over residues 729 to 763 (QEEKSKIEDNEKAIEEEKKEEKTEKKEEKEEKADE). The interval 729-783 (QEEKSKIEDNEKAIEEEKKEEKTEKKEEKEEKADEEKSENEEDKTKPEEPSKGVF) is disordered. TPR repeat units lie at residues 1067–1100 (ISSYINSAYFEAANSSYVNAFKLYEKALGDWDFV), 1109–1142 (VTTLTNLAEILAQLKITDKANRLFSAALELSEKI), and 1151–1184 (AMIHYRFAGTLVNENRFDEALGHFEKAHTTFSRH). A disordered region spans residues 1212 to 1271 (QAKDKNKPKKVKAPPVPPQATTKKSKNKSKMAQTQISKLHLNSSTRFSSSSRVKPRLKKK). Residues 1241–1253 (KMAQTQISKLHLN) are compositionally biased toward polar residues. A compositionally biased stretch (low complexity) spans 1254 to 1263 (SSTRFSSSSR).

The protein belongs to the CLU family. In terms of assembly, may associate with the eukaryotic translation initiation factor 3 (eIF-3) complex.

It localises to the cytoplasm. Its function is as follows. mRNA-binding protein involved in proper cytoplasmic distribution of mitochondria. This Meyerozyma guilliermondii (strain ATCC 6260 / CBS 566 / DSM 6381 / JCM 1539 / NBRC 10279 / NRRL Y-324) (Yeast) protein is Clustered mitochondria protein homolog.